Reading from the N-terminus, the 467-residue chain is Solute carrier family 52, riboflavin transporter, member 3 (467 aa).

At 1-2 (MA) the chain is on the cytoplasmic side. The chain crosses the membrane as a helical span at residues 3-23 (FLIHLLVCTFGMGSWVAINGL). Residues 24–43 (WVELPLLVTELPEGWYLPSY) lie on the Extracellular side of the membrane. A helical transmembrane segment spans residues 44-64 (LTVIIQLANVGPLLVTLLHHF). Residues 65–71 (RPGCLSE) are Cytoplasmic-facing. Residues 72-92 (VAVVFTVLGVGTIACTLFAFL) traverse the membrane as a helical segment. Residues 93-105 (WNVTSWVLGSRHS) lie on the Extracellular side of the membrane. N-linked (GlcNAc...) asparagine glycosylation is present at Asn-94. The chain crosses the membrane as a helical span at residues 106–126 (IAFLVLTFFLALVDCTSSVTF). Topologically, residues 127–137 (LPFMSRLPTYY) are cytoplasmic. The chain crosses the membrane as a helical span at residues 138-158 (LTTFFVGEGLSGLLPALVALA). The Extracellular segment spans residues 159 to 220 (QGSGLTTCVN…SRYLPANFSP (62 aa)). N-linked (GlcNAc...) asparagine glycosylation occurs at Asn-168. A helical membrane pass occupies residues 221–241 (LVFFLLLSFMMACCFISFFFL). The Cytoplasmic segment spans residues 242 to 294 (QRQPKRWEASIEDLLTSQVTLNSIRPQEGKDLGPPEESGKAQDPPEEKTAPQH). Ser-251 carries the phosphoserine modification. A disordered region spans residues 266-288 (RPQEGKDLGPPEESGKAQDPPEE). Residues 268–288 (QEGKDLGPPEESGKAQDPPEE) show a composition bias toward basic and acidic residues. A helical transmembrane segment spans residues 295 to 315 (LAHLTFIYVLVAFVNALTNGV). At 316 to 333 (LPSVQTYSCLSYGPVAYH) the chain is on the extracellular side. Residues 334–354 (LSATLSSMASPLTCFLSIFLP) traverse the membrane as a helical segment. Topologically, residues 355-359 (NRSLP) are cytoplasmic. A helical transmembrane segment spans residues 360–380 (FLGVLAVLGTSFGAYNMAMAV). The Extracellular segment spans residues 381–394 (MSPCPFMQGHWGGE). Residues 395-415 (VLIVVSWVLFTGCLSYVKVML) form a helical membrane-spanning segment. Residues 416-425 (GVILRDHSRS) are Cytoplasmic-facing. A helical transmembrane segment spans residues 426–446 (ALLWCGAAVQLGSLLGAVVMF). Residues 447-467 (PLVNVLRLFSSADFCSLQCSA) are Extracellular-facing.

This sequence belongs to the riboflavin transporter family.

It is found in the cell membrane. The enzyme catalyses riboflavin(in) = riboflavin(out). Its function is as follows. Plasma membrane transporter mediating the uptake by cells of the water soluble vitamin B2/riboflavin that plays a key role in biochemical oxidation-reduction reactions of the carbohydrate, lipid, and amino acid metabolism. This chain is Solute carrier family 52, riboflavin transporter, member 3 (SLC52A3), found in Bos taurus (Bovine).